Reading from the N-terminus, the 394-residue chain is Probable fatty acyl-CoA transferase Rv3272 (394 aa).

Asp175 serves as the catalytic Nucleophile.

This sequence belongs to the CoA-transferase III family. As to quaternary structure, homodimer.

Functionally, probably involved in fatty acid metabolism. Binds to fatty acyl-CoAs of varying carbon chain lengths, with the highest binding affinity for palmitoyl-CoA (C16:0). In vitro, alters the cell wall lipid profile and protects mycobacteria from acidic, oxidative and antibiotic stress. May play a significant role in host-pathogen interaction. This Mycobacterium tuberculosis (strain ATCC 25618 / H37Rv) protein is Probable fatty acyl-CoA transferase Rv3272.